A 100-amino-acid polypeptide reads, in one-letter code: Urease subunit gamma (100 aa).

It belongs to the urease gamma subunit family. In terms of assembly, heterotrimer of UreA (gamma), UreB (beta) and UreC (alpha) subunits. Three heterotrimers associate to form the active enzyme.

It localises to the cytoplasm. It catalyses the reaction urea + 2 H2O + H(+) = hydrogencarbonate + 2 NH4(+). The protein operates within nitrogen metabolism; urea degradation; CO(2) and NH(3) from urea (urease route): step 1/1. This is Urease subunit gamma from Burkholderia thailandensis (strain ATCC 700388 / DSM 13276 / CCUG 48851 / CIP 106301 / E264).